The sequence spans 66 residues: Large ribosomal subunit protein uL29 (66 aa).

The protein belongs to the universal ribosomal protein uL29 family.

The protein is Large ribosomal subunit protein uL29 of Bacillus anthracis (strain CDC 684 / NRRL 3495).